Consider the following 225-residue polypeptide: Uracil-DNA glycosylase (225 aa).

Aspartate 64 acts as the Proton acceptor in catalysis.

This sequence belongs to the uracil-DNA glycosylase (UDG) superfamily. UNG family.

The protein localises to the cytoplasm. It carries out the reaction Hydrolyzes single-stranded DNA or mismatched double-stranded DNA and polynucleotides, releasing free uracil.. Excises uracil residues from the DNA which can arise as a result of misincorporation of dUMP residues by DNA polymerase or due to deamination of cytosine. The chain is Uracil-DNA glycosylase from Lachnoclostridium phytofermentans (strain ATCC 700394 / DSM 18823 / ISDg) (Clostridium phytofermentans).